A 461-amino-acid polypeptide reads, in one-letter code: Transforming growth factor beta-1-induced transcript 1 protein (461 aa).

M1 is subject to N-acetylmethionine. A disordered region spans residues 1–87 (MEDLDALLSD…PFSSSSGVLG (87 aa)). The tract at residues 1-200 (MEDLDALLSD…GSPSPPEPTG (200 aa)) is transcription activation. Positions 1–240 (MEDLDALLSD…CNKPIAGQVV (240 aa)) are interaction with PTK2B/PYK2. An LD motif 1 motif is present at residues 3-15 (DLDALLSDLETTT). At T33 the chain carries Phosphothreonine. Y38 carries the phosphotyrosine modification. Positions 40 to 52 (HQPQTGSGESSGA) are enriched in polar residues. Y60 is modified (phosphotyrosine; by FAK2 and FYN). The residue at position 68 (S68) is a Phosphoserine. The interaction with PTK2/FAK1 stretch occupies residues 83–136 (SGVLGTGLCELDRLLQELNATQFNITDEIMSQFPSSKVASGEQKEDQSEDKKRP). Positions 92–104 (ELDRLLQELNATQ) match the LD motif 2 motif. The tract at residues 116 to 152 (PSSKVASGEQKEDQSEDKKRPSLPSSPSPGLPKASAT) is disordered. Positions 124 to 135 (EQKEDQSEDKKR) are enriched in basic and acidic residues. Residues S137, S140, S141, S143, S164, and S186 each carry the phosphoserine modification. The short motif at 157–168 (ELDRLMASLSDF) is the LD motif 3 element. The interval 172 to 205 (NHLPASGPTQPPVVSSTNEGSPSPPEPTGKGSLD) is disordered. Over residues 183 to 192 (PVVSSTNEGS) the composition is skewed to polar residues. T188 bears the Phosphothreonine mark. Residues S192 and S194 each carry the phosphoserine modification. The LD motif 4 signature appears at 203–215 (SLDTMLGLLQSDL). LIM zinc-binding domains are found at residues 226-285 (GLCG…RFSP), 286-343 (RCGF…QLFA), 344-403 (PRCQ…RRGS), and 404-461 (LCAT…KLFG). Position 403 is a phosphoserine (S403). Phosphothreonine is present on T407.

It belongs to the paxillin family. As to quaternary structure, homooligomer. Interacts with PPARG. Interacts with TRAF4. Interacts with CRIP2. Interacts with HSPB1. Interacts with ILK. Interacts with LIMS1 and LIMS2. Interacts with NCK2. Interacts with NUDT16L1. Interacts with PAK. Interacts with PTPN12. Interacts with TCF3. Interacts with TCF7L2. Interacts with VCL. Interacts (via LD motif 3) with GIT1. Also interacts with GIT2. Forms a complex with ARHGEF7. Interacts with AR/androgen receptor in a ligand-dependent manner. Interacts with CSK. Interacts with PTK2/FAK1 and PTK2B/PYK2. Interacts with SLC6A3 and SLC6A4. Interacts with NR3C1. Interacts with SMAD3. Interacts with MAPK15. Interacts with SRC. Interacts with LYN. Interacts with talin. Interacts (via LIM zinc-binding domain 2) with CBLC (via RING-type zinc finger); the interaction is direct and enhances CBLC E3 ubiquitin-protein ligase activity. Interacts with PARVA. Interacts with PXN. In terms of processing, phosphorylated by gonadotropin-releasing hormone-activated SRC. As to expression, expressed in platelets, smooth muscle and prostate stromal cells (at protein level).

It localises to the cell junction. It is found in the focal adhesion. The protein localises to the nucleus matrix. The protein resides in the cytoplasm. Its subcellular location is the cytoskeleton. In terms of biological role, functions as a molecular adapter coordinating multiple protein-protein interactions at the focal adhesion complex and in the nucleus. Links various intracellular signaling modules to plasma membrane receptors and regulates the Wnt and TGFB signaling pathways. May also regulate SLC6A3 and SLC6A4 targeting to the plasma membrane hence regulating their activity. In the nucleus, functions as a nuclear receptor coactivator regulating glucocorticoid, androgen, mineralocorticoid and progesterone receptor transcriptional activity. May play a role in the processes of cell growth, proliferation, migration, differentiation and senescence. May have a zinc-dependent DNA-binding activity. This Homo sapiens (Human) protein is Transforming growth factor beta-1-induced transcript 1 protein (TGFB1I1).